Reading from the N-terminus, the 207-residue chain is uncharacterized protein (207 aa).

It belongs to the IIV-6 350L family.

This is an uncharacterized protein from Invertebrate iridescent virus 6 (IIV-6).